Reading from the N-terminus, the 286-residue chain is Pantothenate synthetase (286 aa).

32–39 (MGALHEGH) lines the ATP pocket. Histidine 39 serves as the catalytic Proton donor. Residue glutamine 63 coordinates (R)-pantoate. Residue glutamine 63 participates in beta-alanine binding. 149–152 (GEKD) lines the ATP pocket. Glutamine 155 contacts (R)-pantoate. Residues leucine 178 and 186-189 (SSSR) each bind ATP.

This sequence belongs to the pantothenate synthetase family. In terms of assembly, homodimer.

It is found in the cytoplasm. The catalysed reaction is (R)-pantoate + beta-alanine + ATP = (R)-pantothenate + AMP + diphosphate + H(+). The protein operates within cofactor biosynthesis; (R)-pantothenate biosynthesis; (R)-pantothenate from (R)-pantoate and beta-alanine: step 1/1. Catalyzes the condensation of pantoate with beta-alanine in an ATP-dependent reaction via a pantoyl-adenylate intermediate. The chain is Pantothenate synthetase from Bartonella quintana (strain Toulouse) (Rochalimaea quintana).